The primary structure comprises 417 residues: Serine/threonine-protein kinase PkaB (417 aa).

Residues 9-270 (YTAHQILGRG…ELSARLRELL (262 aa)) form the Protein kinase domain. Residues 15–23 (LGRGSAGTV) and K36 each bind ATP. D130 acts as the Proton acceptor in catalysis. Disordered regions lie at residues 279–371 (LDVD…RAAT) and 395–417 (LATG…PAAP). Acidic residues predominate over residues 280–293 (DVDEPDAEQPEDAP). 2 stretches are compositionally biased toward low complexity: residues 294 to 308 (DASA…STAE) and 349 to 368 (GTAR…ARNR). The segment covering 408 to 417 (DTRNSAPAAP) has biased composition (polar residues).

The protein belongs to the protein kinase superfamily. Ser/Thr protein kinase family. In terms of processing, autophosphorylated mainly at Thr.

It carries out the reaction L-seryl-[protein] + ATP = O-phospho-L-seryl-[protein] + ADP + H(+). The enzyme catalyses L-threonyl-[protein] + ATP = O-phospho-L-threonyl-[protein] + ADP + H(+). The polypeptide is Serine/threonine-protein kinase PkaB (pkaB) (Streptomyces coelicolor (strain ATCC BAA-471 / A3(2) / M145)).